The chain runs to 537 residues: Eukaryotic translation initiation factor 3 subunit L (537 aa).

The PCI domain maps to threonine 301–histidine 513.

This sequence belongs to the eIF-3 subunit L family. Component of the eukaryotic translation initiation factor 3 (eIF-3) complex.

It is found in the cytoplasm. Functionally, component of the eukaryotic translation initiation factor 3 (eIF-3) complex, which is involved in protein synthesis of a specialized repertoire of mRNAs and, together with other initiation factors, stimulates binding of mRNA and methionyl-tRNAi to the 40S ribosome. The eIF-3 complex specifically targets and initiates translation of a subset of mRNAs involved in cell proliferation. In Aedes aegypti (Yellowfever mosquito), this protein is Eukaryotic translation initiation factor 3 subunit L.